The sequence spans 129 residues: MSHDPTPISDNPAEFTLDPVIAARLKLNDAGLIPAVVQAVDTREVLMMAWMDTHALAYTLATRRGTYYSRSRDEYWIKGLTSGNVQEVTDVALDCDGDTVLVTVHQTGGACHTGARTCFDADPLLGPGQ.

A Mg(2+)-binding site is contributed by Asp-94. Cys-95 contacts Zn(2+). Mg(2+)-binding residues include Asp-96 and Asp-98. Zn(2+) contacts are provided by Cys-111 and Cys-118.

Belongs to the PRA-CH family. Homodimer. The cofactor is Mg(2+). Zn(2+) is required as a cofactor.

Its subcellular location is the cytoplasm. The enzyme catalyses 1-(5-phospho-beta-D-ribosyl)-5'-AMP + H2O = 1-(5-phospho-beta-D-ribosyl)-5-[(5-phospho-beta-D-ribosylamino)methylideneamino]imidazole-4-carboxamide. Its pathway is amino-acid biosynthesis; L-histidine biosynthesis; L-histidine from 5-phospho-alpha-D-ribose 1-diphosphate: step 3/9. Functionally, catalyzes the hydrolysis of the adenine ring of phosphoribosyl-AMP. The sequence is that of Phosphoribosyl-AMP cyclohydrolase from Corynebacterium efficiens (strain DSM 44549 / YS-314 / AJ 12310 / JCM 11189 / NBRC 100395).